Reading from the N-terminus, the 296-residue chain is Small ribosomal subunit protein uS2 (296 aa).

Low complexity predominate over residues 274 to 284 (ASSAAPADTWA). A disordered region spans residues 274–296 (ASSAAPADTWAGESGNPDAGVKW).

The protein belongs to the universal ribosomal protein uS2 family. In terms of assembly, component of the small ribosomal subunit. Mature ribosomes consist of a small (40S) and a large (60S) subunit. The 40S subunit contains about 33 different proteins and 1 molecule of RNA (18S). The 60S subunit contains about 49 different proteins and 3 molecules of RNA (25S, 5.8S and 5S). Interacts with RPS21.

Its subcellular location is the cytoplasm. Its function is as follows. Required for the assembly and/or stability of the 40S ribosomal subunit. Required for the processing of the 20S rRNA-precursor to mature 18S rRNA in a late step of the maturation of 40S ribosomal subunits. The chain is Small ribosomal subunit protein uS2 from Ajellomyces capsulatus (strain G186AR / H82 / ATCC MYA-2454 / RMSCC 2432) (Darling's disease fungus).